Here is a 346-residue protein sequence, read N- to C-terminus: RNA polymerase II holoenzyme cyclin-like subunit (346 aa).

Residues 59–158 (NLLIKLGRRL…EMDSYLFLHH (100 aa)) enclose the Cyclin N-terminal domain.

This sequence belongs to the cyclin family. Cyclin C subfamily. Component of the SRB8-11 complex, a regulatory module of the Mediator complex.

The protein resides in the nucleus. Functionally, component of the SRB8-11 complex. The SRB8-11 complex is a regulatory module of the Mediator complex which is itself involved in regulation of basal and activated RNA polymerase II-dependent transcription. The SRB8-11 complex may be involved in the transcriptional repression of a subset of genes regulated by Mediator. It may inhibit the association of the Mediator complex with RNA polymerase II to form the holoenzyme complex. The SRB8-11 complex phosphorylates the C-terminal domain (CTD) of the largest subunit of RNA polymerase II. In Scheffersomyces stipitis (strain ATCC 58785 / CBS 6054 / NBRC 10063 / NRRL Y-11545) (Yeast), this protein is RNA polymerase II holoenzyme cyclin-like subunit (SSN8).